A 632-amino-acid polypeptide reads, in one-letter code: MSEQTINNKETRGFQSEVKQLLHLMIHSLYSNKEIFLRELISNASDASDKLRFKALSNGDLYEGNADLGVKISFNVEANTLTISDNGIGMGREDVIEHLGTIAKSGTADFFSKLSEDQSKDSQLIGQFGVGFYSAFIVADAVTVRTRVAGAAKDQAVQWHSEGEGDYTIEDVTKESRGTDIILHMRDEGKEFLSEWRLKEVIGKYSDHIGIPVSIWTVEKDEEGKETEGKWEQVNKAQALWTRNKSEIEDAEYQEFYKHVSHDFADPLTWSHNKVEGKNDYTSLLYIPAKAPFDMMNRDHKSGLKLYVQRVFVMDDAEQFMPSYLRFVKGLIDSNDLALNVSREILQDNKVTQSLRGACTKRVLSMLEKIAKKDNDKYLSFWKEFGQVLKEGLAEDFANKDKIAGLLRFASTNKDSSEQAISLASYVERMKEDQDKIFYLTSDSYAAAKNSPHLEQFKSKGIEVVLMYDRIDEWLMSYLTEFDGKQFQSITKAGLDLSKFENEAEKEKQKETTEEFKSVVERTKAYLGDRVKEVRTTFKLATTPAVVVTDDFEMGTQMAKLLEAAGQAAPEVKYIFEINPEHALIKQMADEADEEAFGRWVEMLLGQAMLAERGSLDDPSQFLSAMNQLLSK.

The tract at residues 1–343 is a; substrate-binding; sequence MSEQTINNKE…SNDLALNVSR (343 aa). The segment at 344–560 is b; it reads EILQDNKVTQ…DFEMGTQMAK (217 aa). The c stretch occupies residues 561–632; it reads LLEAAGQAAP…LSAMNQLLSK (72 aa).

The protein belongs to the heat shock protein 90 family. Homodimer.

The protein localises to the cytoplasm. Functionally, molecular chaperone. Has ATPase activity. The chain is Chaperone protein HtpG from Aliivibrio salmonicida (strain LFI1238) (Vibrio salmonicida (strain LFI1238)).